Here is an 85-residue protein sequence, read N- to C-terminus: Large ribosomal subunit protein bL27 (85 aa).

Residues 1-22 form a disordered region; sequence MAHKKGQGSSRNGRDSPGQHRG.

The protein belongs to the bacterial ribosomal protein bL27 family.

The sequence is that of Large ribosomal subunit protein bL27 from Anaeromyxobacter sp. (strain Fw109-5).